Here is a 172-residue protein sequence, read N- to C-terminus: Large ribosomal subunit protein uL10 (172 aa).

This sequence belongs to the universal ribosomal protein uL10 family. Part of the ribosomal stalk of the 50S ribosomal subunit. The N-terminus interacts with L11 and the large rRNA to form the base of the stalk. The C-terminus forms an elongated spine to which L12 dimers bind in a sequential fashion forming a multimeric L10(L12)X complex.

Forms part of the ribosomal stalk, playing a central role in the interaction of the ribosome with GTP-bound translation factors. This chain is Large ribosomal subunit protein uL10, found in Methylorubrum extorquens (strain CM4 / NCIMB 13688) (Methylobacterium extorquens).